A 138-amino-acid chain; its full sequence is Putative nickel-responsive regulator (138 aa).

4 residues coordinate Ni(2+): histidine 76, histidine 87, histidine 89, and cysteine 95.

It belongs to the transcriptional regulatory CopG/NikR family. Ni(2+) is required as a cofactor.

Functionally, transcriptional regulator. This is Putative nickel-responsive regulator from Pseudomonas putida (strain ATCC 47054 / DSM 6125 / CFBP 8728 / NCIMB 11950 / KT2440).